The sequence spans 141 residues: Auxin-responsive protein SAUR64 (141 aa).

It belongs to the ARG7 family.

The protein resides in the cell membrane. May promote auxin-stimulated organ elongation, such as hypocotyls, stamen filaments and petals. The chain is Auxin-responsive protein SAUR64 from Arabidopsis thaliana (Mouse-ear cress).